Consider the following 440-residue polypeptide: Argininosuccinate lyase (440 aa).

Belongs to the lyase 1 family. Argininosuccinate lyase subfamily.

Its subcellular location is the cytoplasm. The catalysed reaction is 2-(N(omega)-L-arginino)succinate = fumarate + L-arginine. It functions in the pathway amino-acid biosynthesis; L-arginine biosynthesis; L-arginine from L-ornithine and carbamoyl phosphate: step 3/3. The polypeptide is Argininosuccinate lyase (Clostridium botulinum (strain Kyoto / Type A2)).